We begin with the raw amino-acid sequence, 278 residues long: ATPase SWSAP1 (278 aa).

Positions 237 to 278 (SPEKKDSSAGSQSLTLGCDNLPGPGSPLDGILTSETGADSKT) are disordered. Residues 269–278 (TSETGADSKT) show a composition bias toward polar residues.

In terms of assembly, interacts with ZSWIM7; they form a functional complex involved in homologous recombination repair and stabilize each other. Interacts with RAD51, RAD51B, RAD51C, RAD51D and XRCC3; involved in homologous recombination repair.

It localises to the nucleus. ATPase which is preferentially stimulated by single-stranded DNA and is involved in homologous recombination repair (HRR). Has a DNA-binding activity which is independent of its ATPase activity. The protein is ATPase SWSAP1 (Swsap1) of Mus musculus (Mouse).